The primary structure comprises 611 residues: Probable potassium transport system protein Kup 1 (611 aa).

Helical transmembrane passes span 6–26 (LMVGALGVVYGDIGTSPLYTM), 44–64 (MLSLIVWTLLITTSIKYVAVV), 90–110 (LGVIAMGLIGAALLYGDGAIT), 129–149 (ISPYIVTLSAIILVGLFALQA), 158–178 (LFGPVMIAWFIVIGILGLFGI), 193–213 (GLSYLFSHGMTGFLVLGAVFL), 237–257 (WYGLVLPCLILNYAGQTAVVV), 280–300 (LVALATVATIIASQAIISGAF), 328–348 (IYIGFVNWTLMALTLGLTLGF), 354–374 (LAAAFGIAVSLTMLLTSILMF), 385–405 (LAASLLTAGLFVVVDMSFVSA), and 410–430 (VLEGGWFPLVVAAVIFFLMMT).

This sequence belongs to the HAK/KUP transporter (TC 2.A.72) family.

The protein resides in the cell inner membrane. It carries out the reaction K(+)(in) + H(+)(in) = K(+)(out) + H(+)(out). Its function is as follows. Transport of potassium into the cell. Likely operates as a K(+):H(+) symporter. The polypeptide is Probable potassium transport system protein Kup 1 (Bradyrhizobium sp. (strain BTAi1 / ATCC BAA-1182)).